Reading from the N-terminus, the 798-residue chain is Translation initiation factor IF-2 (798 aa).

Positions 40–207 are disordered; sequence SEQETKLRQA…QQESAKPAVP (168 aa). Residues 57-186 are compositionally biased toward low complexity; that stretch reads NTQSKATNNQ…RNNFNNQNRN (130 aa). A compositionally biased stretch (basic residues) spans 187 to 196; sequence RFNKKGKKGK. Residues 300–469 form the tr-type G domain; sequence TRPPVVTIMG…LLIAEVEDLK (170 aa). Residues 309–316 form a G1 region; that stretch reads GHVDHGKT. 309-316 contacts GTP; it reads GHVDHGKT. The G2 stretch occupies residues 334-338; that stretch reads GITQH. A G3 region spans residues 355-358; it reads DTPG. GTP is bound by residues 355 to 359 and 409 to 412; these read DTPGH and NKID. The tract at residues 409-412 is G4; the sequence is NKID. Residues 445 to 447 are G5; that stretch reads SAK.

It belongs to the TRAFAC class translation factor GTPase superfamily. Classic translation factor GTPase family. IF-2 subfamily.

The protein localises to the cytoplasm. One of the essential components for the initiation of protein synthesis. Protects formylmethionyl-tRNA from spontaneous hydrolysis and promotes its binding to the 30S ribosomal subunits. Also involved in the hydrolysis of GTP during the formation of the 70S ribosomal complex. This Enterococcus faecalis (strain ATCC 700802 / V583) protein is Translation initiation factor IF-2.